Here is a 158-residue protein sequence, read N- to C-terminus: SsrA-binding protein (158 aa).

The disordered stretch occupies residues 135-158 (DKRKTLKDRDWERDKQRGFKKDLD). Residues 141-158 (KDRDWERDKQRGFKKDLD) show a composition bias toward basic and acidic residues.

This sequence belongs to the SmpB family.

It is found in the cytoplasm. Its function is as follows. Required for rescue of stalled ribosomes mediated by trans-translation. Binds to transfer-messenger RNA (tmRNA), required for stable association of tmRNA with ribosomes. tmRNA and SmpB together mimic tRNA shape, replacing the anticodon stem-loop with SmpB. tmRNA is encoded by the ssrA gene; the 2 termini fold to resemble tRNA(Ala) and it encodes a 'tag peptide', a short internal open reading frame. During trans-translation Ala-aminoacylated tmRNA acts like a tRNA, entering the A-site of stalled ribosomes, displacing the stalled mRNA. The ribosome then switches to translate the ORF on the tmRNA; the nascent peptide is terminated with the 'tag peptide' encoded by the tmRNA and targeted for degradation. The ribosome is freed to recommence translation, which seems to be the essential function of trans-translation. The polypeptide is SsrA-binding protein (Psychrobacter arcticus (strain DSM 17307 / VKM B-2377 / 273-4)).